A 301-amino-acid chain; its full sequence is Thyrotroph embryonic factor (301 aa).

Disordered regions lie at residues M1–M70 and E130–C174. Position 30 is a phosphoserine (S30). Residues K39 to L59 are compositionally biased toward basic and acidic residues. Positions S131–S158 are enriched in low complexity. The 64-residue stretch at D231–Y294 folds into the bZIP domain. The basic motif stretch occupies residues K233–R253. The segment at L254 to I261 is leucine-zipper.

The protein belongs to the bZIP family. PAR subfamily. As to quaternary structure, binds DNA as a homodimer or a heterodimer. Can form a heterodimer with DBP. Isoform Alpha and isoform Beta are expressed at high levels in lung, bladder, kidney, gut and brain.

The protein resides in the nucleus. In terms of biological role, transcription factor that binds to and transactivates the TSHB promoter. Binds to a minimal DNA-binding sequence 5'-[TC][AG][AG]TTA[TC][AG]-3'. Also activates the telokin promoter in smooth muscle-specific and calcium-dependent manner. This is Thyrotroph embryonic factor (Tef) from Mus musculus (Mouse).